A 284-amino-acid polypeptide reads, in one-letter code: MVLMIVSGRSGSGKSVALRALEDMGFYCVDNLPVVLLPQLASALAASNISAAVSIDVRNMPESPEIFEQAMDNLPQAFAPQLLFLDADRNTLIRRYSDTRRLHPLSALNLSLESAIDEEDSLLEPLRSRADLVIDTSEMSVHELAEMLRTRMLGKRERELTMVFESFGYKHGIPIDADYVFDVRFLPNPHWDPKLRPMTGLDRPVAAFLDRHTEVHNFIYQTRSYLELWLPMLETNNRSYLTVAVGCTGGKHRSVYIAEQLADYFRSRGKNAQSRHRTLEKSKS.

Residue glycine 8 to serine 15 coordinates ATP. Aspartate 56–asparagine 59 serves as a coordination point for GTP. The tract at residues arginine 266 to serine 284 is RNA-binding.

It belongs to the RapZ-like family. RapZ subfamily. As to quaternary structure, homotrimer.

Its function is as follows. Modulates the synthesis of GlmS, by affecting the processing and stability of the regulatory small RNA GlmZ. When glucosamine-6-phosphate (GlcN6P) concentrations are high in the cell, RapZ binds GlmZ and targets it to cleavage by RNase E. Consequently, GlmZ is inactivated and unable to activate GlmS synthesis. Under low GlcN6P concentrations, RapZ is sequestered and inactivated by an other regulatory small RNA, GlmY, preventing GlmZ degradation and leading to synthesis of GlmS. The sequence is that of RNase adapter protein RapZ from Sodalis glossinidius (strain morsitans).